We begin with the raw amino-acid sequence, 224 residues long: Heme response regulator HssR (224 aa).

Residues 3–116 (TCLIVDDDPK…ELMFRIKAVL (114 aa)) form the Response regulatory domain. A 4-aspartylphosphate modification is found at aspartate 52. Positions 124–222 (NNEVSIGNLT…VRGLGYKVDD (99 aa)) form a DNA-binding region, ompR/PhoB-type.

Post-translationally, phosphorylated by HssS.

It localises to the cytoplasm. Functionally, member of the two-component regulatory system HssS/HssR involved in intracellular heme homeostasis and tempering of staphylococcal virulence. Phosphorylated HssR binds to a direct repeat sequence within hrtAB promoter and activates the expression of hrtAB, an efflux pump, in response to extracellular heme, hemin, hemoglobin or blood. In Staphylococcus saprophyticus subsp. saprophyticus (strain ATCC 15305 / DSM 20229 / NCIMB 8711 / NCTC 7292 / S-41), this protein is Heme response regulator HssR (hssR).